Reading from the N-terminus, the 568-residue chain is Light-independent protochlorophyllide reductase subunit B (568 aa).

Asp36 contacts [4Fe-4S] cluster. Asp293 acts as the Proton donor in catalysis. A substrate-binding site is contributed by 437 to 438 (GM). The interval 476 to 517 (ANGHPEAGVSVGAAEPSAAPSRSVVTEESNRATTPSSSTVHP) is disordered. Residues 498–515 (SVVTEESNRATTPSSSTV) show a composition bias toward polar residues.

This sequence belongs to the ChlB/BchB/BchZ family. In terms of assembly, protochlorophyllide reductase is composed of three subunits; BchL, BchN and BchB. Forms a heterotetramer of two BchB and two BchN subunits. [4Fe-4S] cluster serves as cofactor.

The catalysed reaction is chlorophyllide a + oxidized 2[4Fe-4S]-[ferredoxin] + 2 ADP + 2 phosphate = protochlorophyllide a + reduced 2[4Fe-4S]-[ferredoxin] + 2 ATP + 2 H2O. The protein operates within porphyrin-containing compound metabolism; bacteriochlorophyll biosynthesis (light-independent). In terms of biological role, component of the dark-operative protochlorophyllide reductase (DPOR) that uses Mg-ATP and reduced ferredoxin to reduce ring D of protochlorophyllide (Pchlide) to form chlorophyllide a (Chlide). This reaction is light-independent. The NB-protein (BchN-BchB) is the catalytic component of the complex. This is Light-independent protochlorophyllide reductase subunit B from Roseiflexus sp. (strain RS-1).